The primary structure comprises 103 residues: Small ribosomal subunit protein uS10 (103 aa).

This sequence belongs to the universal ribosomal protein uS10 family. As to quaternary structure, part of the 30S ribosomal subunit.

In terms of biological role, involved in the binding of tRNA to the ribosomes. This Xylella fastidiosa (strain 9a5c) protein is Small ribosomal subunit protein uS10.